We begin with the raw amino-acid sequence, 114 residues long: Large ribosomal subunit protein bL19 (114 aa).

Belongs to the bacterial ribosomal protein bL19 family.

Its function is as follows. This protein is located at the 30S-50S ribosomal subunit interface and may play a role in the structure and function of the aminoacyl-tRNA binding site. This chain is Large ribosomal subunit protein bL19 (rplS), found in Listeria innocua serovar 6a (strain ATCC BAA-680 / CLIP 11262).